The sequence spans 228 residues: MRGLDLGLLDYVSAWRMMKILHREVASGGDDAFILVEHPHVITVGKHGRTNNVVKWELFVYVVERGGDATYHGPGQLVAYPVVKLRWPLSRYLWMLEEAVIRSLRPLGVEAGRVEKHRGVWVGGKKVASIGIAVEGGVAYHGVAVNVSTDLSYFYHINPCGLHPSAITSLNQLGVEISLEEYKGLFVEAFEEVFEAKVVWVDPAPYLAAAAQLRASPTLLSAPIEAST.

The BPL/LPL catalytic domain occupies 27–198 (SGGDDAFILV…AFEEVFEAKV (172 aa)). Residues 65–72 (RGGDATYH), 129–131 (SIG), and 142–144 (GVA) contribute to the substrate site. Cys-160 acts as the Acyl-thioester intermediate in catalysis.

Belongs to the LipB family.

The protein resides in the cytoplasm. It carries out the reaction octanoyl-[ACP] + L-lysyl-[protein] = N(6)-octanoyl-L-lysyl-[protein] + holo-[ACP] + H(+). It participates in protein modification; protein lipoylation via endogenous pathway; protein N(6)-(lipoyl)lysine from octanoyl-[acyl-carrier-protein]: step 1/2. In terms of biological role, catalyzes the transfer of endogenously produced octanoic acid from octanoyl-acyl-carrier-protein onto the lipoyl domains of lipoate-dependent enzymes. Lipoyl-ACP can also act as a substrate although octanoyl-ACP is likely to be the physiological substrate. The sequence is that of Probable octanoyltransferase from Pyrobaculum calidifontis (strain DSM 21063 / JCM 11548 / VA1).